The primary structure comprises 466 residues: Adenosylhomocysteinase (466 aa).

Residues threonine 57, aspartate 132, and glutamate 192 each coordinate substrate. 193–195 contacts NAD(+); the sequence is TTT. Substrate-binding residues include lysine 222 and aspartate 226. NAD(+)-binding positions include asparagine 227, 256–261, glutamate 279, asparagine 314, 335–337, and asparagine 380; these read GYGDVG and IGH.

This sequence belongs to the adenosylhomocysteinase family. It depends on NAD(+) as a cofactor.

It localises to the cytoplasm. It catalyses the reaction S-adenosyl-L-homocysteine + H2O = L-homocysteine + adenosine. It functions in the pathway amino-acid biosynthesis; L-homocysteine biosynthesis; L-homocysteine from S-adenosyl-L-homocysteine: step 1/1. In terms of biological role, may play a key role in the regulation of the intracellular concentration of adenosylhomocysteine. This Sinorhizobium medicae (strain WSM419) (Ensifer medicae) protein is Adenosylhomocysteinase.